We begin with the raw amino-acid sequence, 301 residues long: Rhodopsin (301 aa).

At 1 to 18 (LHMIHLHWYQYPPMNPMM) the chain is on the extracellular side. The chain crosses the membrane as a helical span at residues 19 to 43 (YPLLLIFMLFTGILCLAGNFVTIWV). The Cytoplasmic segment spans residues 44–55 (FMNTKSLRTPAN). Residues 56-78 (LLVVNLAMSDFLMMFTMFPPMMV) traverse the membrane as a helical segment. Topologically, residues 79–92 (TCYYHTWTLGPTFC) are extracellular. Residues cysteine 92 and cysteine 169 are joined by a disulfide bond. Residues 93-115 (QVYAFLGNLCGCASIWTMVFITF) form a helical membrane-spanning segment. The 'Ionic lock' involved in activated form stabilization motif lies at 116 to 118 (DRY). At 116–134 (DRYNVIVKGVAGEPLSTKK) the chain is on the cytoplasmic side. Residues 135–155 (ASLWILSVWVLSTAWCIAPFF) traverse the membrane as a helical segment. Over 156–182 (GWNHYVPEGNLTGCGTDYLSEDILSRS) the chain is Extracellular. A glycan (N-linked (GlcNAc...) asparagine) is linked at asparagine 165. A helical membrane pass occupies residues 183–204 (YLYIYSTWVYFLPLAITIYCYV). The Cytoplasmic portion of the chain corresponds to 205–245 (FIIKAVAAHEKGMRDQAKKMGIKSLRNEEAQKTSAECRLAK). Residues 246–267 (NAMTTVALWFIAWTPCLLINWV) traverse the membrane as a helical segment. At 268–278 (GMFARSYLSPV) the chain is on the extracellular side. A helical transmembrane segment spans residues 279–300 (YTIWGYVFAKANAVYNPIVYAI). N6-(retinylidene)lysine is present on lysine 288.

It belongs to the G-protein coupled receptor 1 family. Opsin subfamily. Homodimer. Interacts with GNAQ. Post-translationally, contains one covalently linked retinal chromophore.

The protein localises to the cell projection. The protein resides in the rhabdomere membrane. Photoreceptor required for image-forming vision at low light intensity. Can use both retinal and 3-dehydroretinal as visual pigment. Light-induced isomerization of 11-cis to all-trans retinal triggers a conformational change that activates signaling via G-proteins. Signaling via GNAQ probably mediates the activation of phospholipase C. The sequence is that of Rhodopsin (RHO) from Cambarus hubrichti (Salem cave crayfish).